The following is a 398-amino-acid chain: Sphingosine 1-phosphate receptor 5 (398 aa).

The Extracellular portion of the chain corresponds to 1-40 (MEPGLLRPAPVSEVIVLHYNYTGKLRGARYQPGAGLRADA). Residue asparagine 20 is glycosylated (N-linked (GlcNAc...) asparagine). Residues 41–61 (VVCLAVCALIVLENLAVLVVL) form a helical membrane-spanning segment. At 62–70 (GRHPRFHAP) the chain is on the cytoplasmic side. Residues 71–91 (MFLLLGSLTLSDLLAGAAYAA) form a helical membrane-spanning segment. Over 92 to 111 (NILLSGPLTLRLSPALWFAR) the chain is Extracellular. The chain crosses the membrane as a helical span at residues 112–132 (EGGVFVALAASVLSLLAIALE). The Cytoplasmic segment spans residues 133-151 (RLLTMERRGPAPAARRGRT). The helical transmembrane segment at 152 to 172 (LALAAGAWGVSLLLGLLPALG) threads the bilayer. At 173–191 (WNCLGRLEACSTVLPLYAK) the chain is on the extracellular side. A helical membrane pass occupies residues 192–212 (AYVLFCVLAFVGILAAICGLY). Residues 213-252 (ARIYCQVRAKAQRLRARPGAGEGTSARARGTPRSLALLRT) lie on the Cytoplasmic side of the membrane. Residues 253–273 (LSVVLVAFVACWGPLFLLLLL) traverse the membrane as a helical segment. Residues 274 to 287 (DVACPARACPVLLQ) are Extracellular-facing. A helical membrane pass occupies residues 288-308 (ADPFLGLAMANSLLNPIIYTF). The Cytoplasmic portion of the chain corresponds to 309–398 (TNRDLRHALL…QTLVPPPAAD (90 aa)). A lipid anchor (S-palmitoyl cysteine) is attached at cysteine 323. The segment at 332–398 (SGTSRSPGST…QTLVPPPAAD (67 aa)) is disordered. Low complexity predominate over residues 334–343 (TSRSPGSTLG). Serine 337 carries the phosphoserine modification. Positions 359–373 (SSSRSERSSPQRDGL) are enriched in basic and acidic residues. Position 381 is a phosphoserine (serine 381).

This sequence belongs to the G-protein coupled receptor 1 family.

The protein resides in the cell membrane. Its function is as follows. Receptor for the lysosphingolipid sphingosine 1-phosphate (S1P). S1P is a bioactive lysophospholipid that elicits diverse physiological effect on most types of cells and tissues. Is coupled to both the G(i/O)alpha and G(12) subclass of heteromeric G-proteins. This is Sphingosine 1-phosphate receptor 5 (S1PR5) from Sus scrofa (Pig).